The primary structure comprises 413 residues: Tyrosine--tRNA ligase (413 aa).

The 'HIGH' region signature appears at 59–68; it reads PTAPDIHLGH. Positions 243-247 match the 'KMSKS' region motif; it reads KMSKS. An ATP-binding site is contributed by Lys246. Residues 351–411 form the S4 RNA-binding domain; that stretch reads LAIGQLLKQA…GKRRFARVTL (61 aa).

This sequence belongs to the class-I aminoacyl-tRNA synthetase family. TyrS type 2 subfamily. In terms of assembly, homodimer.

The protein localises to the cytoplasm. The enzyme catalyses tRNA(Tyr) + L-tyrosine + ATP = L-tyrosyl-tRNA(Tyr) + AMP + diphosphate + H(+). Its function is as follows. Catalyzes the attachment of tyrosine to tRNA(Tyr) in a two-step reaction: tyrosine is first activated by ATP to form Tyr-AMP and then transferred to the acceptor end of tRNA(Tyr). The protein is Tyrosine--tRNA ligase of Burkholderia thailandensis (strain ATCC 700388 / DSM 13276 / CCUG 48851 / CIP 106301 / E264).